A 325-amino-acid polypeptide reads, in one-letter code: Ribonucleoside-diphosphate reductase small chain (325 aa).

Fe cation is bound by residues Asp-76, Glu-107, and His-110. Tyr-114 is a catalytic residue. Residues Glu-170, Glu-204, and His-207 each contribute to the Fe cation site.

This sequence belongs to the ribonucleoside diphosphate reductase small chain family. Heterodimer of a large and a small subunit. Requires Fe cation as cofactor.

The catalysed reaction is a 2'-deoxyribonucleoside 5'-diphosphate + [thioredoxin]-disulfide + H2O = a ribonucleoside 5'-diphosphate + [thioredoxin]-dithiol. In terms of biological role, provides the precursors necessary for DNA synthesis. Catalyzes the biosynthesis of deoxyribonucleotides from the corresponding ribonucleotides. This is Ribonucleoside-diphosphate reductase small chain from Encephalitozoon cuniculi (strain GB-M1) (Microsporidian parasite).